A 454-amino-acid chain; its full sequence is GTPase Der (454 aa).

EngA-type G domains follow at residues 4 to 168 (PQVA…PEKD) and 178 to 352 (MKIA…KQAQ). GTP is bound by residues 10 to 17 (GRPNVGKS), 57 to 61 (DTGGM), 120 to 123 (NKAD), 184 to 191 (GRRNVGKS), 231 to 235 (DTPGL), and 296 to 299 (NKWD). The 85-residue stretch at 353 to 437 (SRVSTGELNR…PIKLYMQQRS (85 aa)) folds into the KH-like domain.

The protein belongs to the TRAFAC class TrmE-Era-EngA-EngB-Septin-like GTPase superfamily. EngA (Der) GTPase family. As to quaternary structure, associates with the 50S ribosomal subunit.

GTPase that plays an essential role in the late steps of ribosome biogenesis. This is GTPase Der from Rhodopirellula baltica (strain DSM 10527 / NCIMB 13988 / SH1).